We begin with the raw amino-acid sequence, 558 residues long: Membrane protein insertase YidC (558 aa).

The next 5 helical transmembrane spans lie at 3-23, 364-384, 438-458, 477-497, and 508-528; these read IKRT…FDNW, FVGN…AVFF, LPVV…LASV, PYFI…KLNP, and MMFM…GLVL.

The protein belongs to the OXA1/ALB3/YidC family. Type 1 subfamily. As to quaternary structure, interacts with the Sec translocase complex via SecD. Specifically interacts with transmembrane segments of nascent integral membrane proteins during membrane integration.

The protein resides in the cell inner membrane. In terms of biological role, required for the insertion and/or proper folding and/or complex formation of integral membrane proteins into the membrane. Involved in integration of membrane proteins that insert both dependently and independently of the Sec translocase complex, as well as at least some lipoproteins. Aids folding of multispanning membrane proteins. This chain is Membrane protein insertase YidC, found in Burkholderia pseudomallei (strain K96243).